Here is a 278-residue protein sequence, read N- to C-terminus: Large ribosomal subunit protein uL2 (278 aa).

The tract at residues 222–278 (GVVMNPIDHPHGGGEGRTSGGRHPVTPWGKPTKGKKTRSNKSTNKFILISRHKRKKK) is disordered.

Belongs to the universal ribosomal protein uL2 family. In terms of assembly, part of the 50S ribosomal subunit. Forms a bridge to the 30S subunit in the 70S ribosome.

One of the primary rRNA binding proteins. Required for association of the 30S and 50S subunits to form the 70S ribosome, for tRNA binding and peptide bond formation. It has been suggested to have peptidyltransferase activity; this is somewhat controversial. Makes several contacts with the 16S rRNA in the 70S ribosome. This chain is Large ribosomal subunit protein uL2, found in Afipia carboxidovorans (strain ATCC 49405 / DSM 1227 / KCTC 32145 / OM5) (Oligotropha carboxidovorans).